Here is a 146-residue protein sequence, read N- to C-terminus: MIF-like protein mif-3 (146 aa).

The protein belongs to the MIF family.

The chain is MIF-like protein mif-3 (mif-3) from Caenorhabditis elegans.